The chain runs to 170 residues: ATP synthase subunit b (170 aa).

Residues 15-37 form a helical membrane-spanning segment; the sequence is FNLFETNILNWAVVVFGLYKFLP.

This sequence belongs to the ATPase B chain family. F-type ATPases have 2 components, F(1) - the catalytic core - and F(0) - the membrane proton channel. F(1) has five subunits: alpha(3), beta(3), gamma(1), delta(1), epsilon(1). F(0) has four main subunits: a(1), b(1), b'(1) and c(10-14). The alpha and beta chains form an alternating ring which encloses part of the gamma chain. F(1) is attached to F(0) by a central stalk formed by the gamma and epsilon chains, while a peripheral stalk is formed by the delta, b and b' chains.

The protein localises to the cellular thylakoid membrane. Functionally, f(1)F(0) ATP synthase produces ATP from ADP in the presence of a proton or sodium gradient. F-type ATPases consist of two structural domains, F(1) containing the extramembraneous catalytic core and F(0) containing the membrane proton channel, linked together by a central stalk and a peripheral stalk. During catalysis, ATP synthesis in the catalytic domain of F(1) is coupled via a rotary mechanism of the central stalk subunits to proton translocation. Its function is as follows. Component of the F(0) channel, it forms part of the peripheral stalk, linking F(1) to F(0). The chain is ATP synthase subunit b from Prochlorococcus marinus (strain MIT 9312).